The primary structure comprises 208 residues: Casparian strip membrane protein 2 (208 aa).

The disordered stretch occupies residues 1-23; sequence MDSKSGRSESAINIPESNSTKHK. Topologically, residues 1 to 46 are cytoplasmic; the sequence is MDSKSGRSESAINIPESNSTKHKSTVVHTATKVAAVAPRGGGWRRG. A compositionally biased stretch (polar residues) spans 8–18; that stretch reads SESAINIPESN. Residues 47–67 form a helical membrane-spanning segment; that stretch reads VSIFDFILRICALAAALAATA. Residues 68–96 are Extracellular-facing; that stretch reads TMGTTDQTLPFFTQFFQFQASYDDLPAFT. Residues 97-117 traverse the membrane as a helical segment; sequence FFVVANGIASGYLVLSLPFSI. The Cytoplasmic portion of the chain corresponds to 118–129; it reads ATIVRPHAAAIK. Residues 130-150 form a helical membrane-spanning segment; sequence LLLIIFDTVMVAFTAAAAAAA. At 151 to 184 the chain is on the extracellular side; it reads AAIVYLAHNGNSKTNWFAICQQFNDFCQRVSGAV. Residues 185 to 205 traverse the membrane as a helical segment; that stretch reads VASFVAAVILIFLVVLSAVAI. At 206 to 208 the chain is on the cytoplasmic side; sequence RKH.

Belongs to the Casparian strip membrane proteins (CASP) family. Homodimer and heterodimers.

The protein localises to the cell membrane. Functionally, regulates membrane-cell wall junctions and localized cell wall deposition. Required for establishment of the Casparian strip membrane domain (CSD) and the subsequent formation of Casparian strips, a cell wall modification of the root endodermis that determines an apoplastic barrier between the intraorganismal apoplasm and the extraorganismal apoplasm and prevents lateral diffusion. In Triphysaria pusilla (Dwarf owl's-clover), this protein is Casparian strip membrane protein 2.